The primary structure comprises 282 residues: Pantothenate synthetase (282 aa).

30–37 (MGYLHEGH) is an ATP binding site. His37 serves as the catalytic Proton donor. Gln61 provides a ligand contact to (R)-pantoate. Gln61 lines the beta-alanine pocket. 147 to 150 (GMKD) is a binding site for ATP. Gln153 provides a ligand contact to (R)-pantoate. ATP-binding positions include Val176 and 184–187 (KSSR).

This sequence belongs to the pantothenate synthetase family. In terms of assembly, homodimer.

The protein localises to the cytoplasm. It carries out the reaction (R)-pantoate + beta-alanine + ATP = (R)-pantothenate + AMP + diphosphate + H(+). It participates in cofactor biosynthesis; (R)-pantothenate biosynthesis; (R)-pantothenate from (R)-pantoate and beta-alanine: step 1/1. Functionally, catalyzes the condensation of pantoate with beta-alanine in an ATP-dependent reaction via a pantoyl-adenylate intermediate. This chain is Pantothenate synthetase, found in Bacillus cereus (strain AH187).